Reading from the N-terminus, the 164-residue chain is uncharacterized protein (164 aa).

This is an uncharacterized protein from Rickettsia bellii (strain RML369-C).